The primary structure comprises 384 residues: BarH-like 2 homeobox protein (384 aa).

Disordered regions lie at residues 1–134, 154–235, and 364–384; these read MTAM…APRT, CAPY…ARTA, and PGGQ…PHPR. Low complexity-rich tracts occupy residues 101–110 and 119–134; these read VPAQSLQPSP and QSAA…APRT. The span at 157–175 shows a compositional bias: polar residues; it reads YSTSVSSPHHTPKQESNAA. Over residues 177 to 217 the composition is skewed to basic and acidic residues; the sequence is ESFRPKLEQEDGKTKLDKREDPQSDIKCHGTKEEGDREITS. A DNA-binding region (homeobox) is located at residues 229–288; sequence PRKARTAFSDHQLNQLERSFERQKYLSVQDRMDLAAALNLTDTQVKTWYQNRRTKWKRQT.

Belongs to the BAR homeobox family.

The protein localises to the nucleus. Functionally, potential regulator of neural basic helix-loop-helix genes. It may down-regulate expression of ASCL1 and, within the thalamus, up-regulate NGN2, thereby regulating distinct patterns of neuronal differentiation. In Mus musculus (Mouse), this protein is BarH-like 2 homeobox protein (Barhl2).